We begin with the raw amino-acid sequence, 642 residues long: Zinc finger protein 14 (642 aa).

One can recognise a KRAB domain in the interval valine 4–lysine 76. The segment at glycine 77–glycine 99 is disordered. Over residues glycine 81–glycine 99 the composition is skewed to polar residues. A C2H2-type 1 zinc finger spans residues histidine 103–histidine 125. The C2H2-type 2; degenerate zinc finger occupies cysteine 141–histidine 163. The segment at tyrosine 169 to histidine 191 adopts a C2H2-type 3 zinc-finger fold. The C2H2-type 4; atypical zinc-finger motif lies at tyrosine 197–histidine 217. 15 C2H2-type zinc fingers span residues tyrosine 223–histidine 245, tyrosine 251–histidine 273, tyrosine 279–histidine 301, tyrosine 307–histidine 329, tyrosine 335–histidine 357, tyrosine 363–histidine 385, tyrosine 391–histidine 413, tyrosine 419–histidine 441, tyrosine 447–histidine 469, tyrosine 475–histidine 497, tyrosine 503–histidine 525, phenylalanine 531–histidine 553, tyrosine 559–histidine 581, tyrosine 587–histidine 609, and tyrosine 615–histidine 637.

This sequence belongs to the krueppel C2H2-type zinc-finger protein family.

Its subcellular location is the nucleus. May be involved in transcriptional regulation. This chain is Zinc finger protein 14 (ZNF14), found in Macaca fascicularis (Crab-eating macaque).